A 156-amino-acid chain; its full sequence is ATP synthase subunit b (156 aa).

Residues 7–27 (LIGELIAFTVFVLFCMKFVWP) traverse the membrane as a helical segment.

The protein belongs to the ATPase B chain family. As to quaternary structure, F-type ATPases have 2 components, F(1) - the catalytic core - and F(0) - the membrane proton channel. F(1) has five subunits: alpha(3), beta(3), gamma(1), delta(1), epsilon(1). F(0) has three main subunits: a(1), b(2) and c(10-14). The alpha and beta chains form an alternating ring which encloses part of the gamma chain. F(1) is attached to F(0) by a central stalk formed by the gamma and epsilon chains, while a peripheral stalk is formed by the delta and b chains.

The protein localises to the cell inner membrane. Functionally, f(1)F(0) ATP synthase produces ATP from ADP in the presence of a proton or sodium gradient. F-type ATPases consist of two structural domains, F(1) containing the extramembraneous catalytic core and F(0) containing the membrane proton channel, linked together by a central stalk and a peripheral stalk. During catalysis, ATP synthesis in the catalytic domain of F(1) is coupled via a rotary mechanism of the central stalk subunits to proton translocation. Its function is as follows. Component of the F(0) channel, it forms part of the peripheral stalk, linking F(1) to F(0). In Pseudoalteromonas translucida (strain TAC 125), this protein is ATP synthase subunit b.